The chain runs to 138 residues: Putative pre-16S rRNA nuclease (138 aa).

It belongs to the YqgF nuclease family.

It localises to the cytoplasm. Could be a nuclease involved in processing of the 5'-end of pre-16S rRNA. This chain is Putative pre-16S rRNA nuclease, found in Bacteroides thetaiotaomicron (strain ATCC 29148 / DSM 2079 / JCM 5827 / CCUG 10774 / NCTC 10582 / VPI-5482 / E50).